The following is a 234-amino-acid chain: Isoprenyl transferase (234 aa).

The active site involves aspartate 13. Mg(2+) is bound at residue aspartate 13. Substrate is bound by residues glycine 14 to arginine 17, tryptophan 18, arginine 26, histidine 30, and serine 58 to glutamate 60. Catalysis depends on asparagine 61, which acts as the Proton acceptor. Substrate is bound by residues tryptophan 62, arginine 64, arginine 180, and arginine 186–serine 188. Glutamate 199 is a binding site for Mg(2+).

This sequence belongs to the UPP synthase family. As to quaternary structure, homodimer. Mg(2+) serves as cofactor.

Catalyzes the condensation of isopentenyl diphosphate (IPP) with allylic pyrophosphates generating different type of terpenoids. This is Isoprenyl transferase from Helicobacter pylori (strain J99 / ATCC 700824) (Campylobacter pylori J99).